The chain runs to 867 residues: Rifampicin phosphotransferase (867 aa).

The interval M1–T314 is ATP-binding. 8 residues coordinate ATP: K22, R117, G132, T136, Q183, E297, Q309, and R311. The interval N327–E754 is rifampicin-binding. Residues Q336 and Y351 each coordinate rifampicin. Residues G767–I865 are swivel phosphohistidine. The Tele-phosphohistidine intermediate role is filled by H825.

The protein belongs to the rifampicin phosphotransferase family.

The enzyme catalyses rifampicin + ATP + H2O = 21-phosphorifampicin + AMP + phosphate + 2 H(+). In terms of biological role, catalyzes the phosphorylation of rifampicin, also known as rifampin (RIF), leading to its inactivation. Confers high level resistance to a variety of clinically used rifamycin antibiotics. Does not show phosphoenolpyruvate (PEP) synthase activity. This Listeria monocytogenes serotype 4b (strain F2365) protein is Rifampicin phosphotransferase.